The chain runs to 403 residues: Imidazolonepropionase (403 aa).

Residues His69 and His71 each contribute to the Fe(3+) site. The Zn(2+) site is built by His69 and His71. 4-imidazolone-5-propanoate contacts are provided by Arg78, Tyr141, and His174. Tyr141 contributes to the N-formimidoyl-L-glutamate binding site. A Fe(3+)-binding site is contributed by His239. Position 239 (His239) interacts with Zn(2+). Residue Gln242 participates in 4-imidazolone-5-propanoate binding. Asp314 is a binding site for Fe(3+). Asp314 is a Zn(2+) binding site. The N-formimidoyl-L-glutamate site is built by Asn316 and Gly318. A 4-imidazolone-5-propanoate-binding site is contributed by Ser319.

The protein belongs to the metallo-dependent hydrolases superfamily. HutI family. Requires Zn(2+) as cofactor. It depends on Fe(3+) as a cofactor.

The protein resides in the cytoplasm. The enzyme catalyses 4-imidazolone-5-propanoate + H2O = N-formimidoyl-L-glutamate. The protein operates within amino-acid degradation; L-histidine degradation into L-glutamate; N-formimidoyl-L-glutamate from L-histidine: step 3/3. Functionally, catalyzes the hydrolytic cleavage of the carbon-nitrogen bond in imidazolone-5-propanoate to yield N-formimidoyl-L-glutamate. It is the third step in the universal histidine degradation pathway. In Legionella pneumophila (strain Corby), this protein is Imidazolonepropionase.